The following is an 897-amino-acid chain: Zinc finger protein zas1 (897 aa).

C2H2-type zinc fingers lie at residues 26–50 (FYCT…ERTH) and 56–79 (FSCS…QQMH). Residues 93–119 (ASCFLGFCVLAHDYVNLINARHFMIEH) form a C2H2-type 3; atypical zinc finger.

Its subcellular location is the nucleus. The protein is Zinc finger protein zas1 (zas1) of Schizosaccharomyces pombe (strain 972 / ATCC 24843) (Fission yeast).